Here is a 516-residue protein sequence, read N- to C-terminus: Methionine--tRNA ligase (516 aa).

A 'HIGH' region motif is present at residues Phe-13–His-23. The short motif at Lys-299–Ser-303 is the 'KMSKS' region element. ATP is bound at residue Lys-302.

It belongs to the class-I aminoacyl-tRNA synthetase family. MetG type 2B subfamily. In terms of assembly, monomer.

The protein resides in the cytoplasm. The enzyme catalyses tRNA(Met) + L-methionine + ATP = L-methionyl-tRNA(Met) + AMP + diphosphate. Functionally, is required not only for elongation of protein synthesis but also for the initiation of all mRNA translation through initiator tRNA(fMet) aminoacylation. This is Methionine--tRNA ligase from Mesorhizobium japonicum (strain LMG 29417 / CECT 9101 / MAFF 303099) (Mesorhizobium loti (strain MAFF 303099)).